Consider the following 106-residue polypeptide: MVYQIKDKADLNGQLTKASGKLVVLDFFATWCGPCKMISPKLAELSTQYADTVVVLKVDVDECEDIAMEYNISSMPTFVFLKNGVKVEEFAGANAQRLEDVIKANI.

The Thioredoxin domain occupies 2–106; sequence VYQIKDKADL…RLEDVIKANI (105 aa). Active-site nucleophile residues include Cys32 and Cys35. The cysteines at positions 32 and 35 are disulfide-linked.

This sequence belongs to the thioredoxin family.

Its function is as follows. Participates in various redox reactions through the reversible oxidation of its active center dithiol to a disulfide and catalyzes dithiol-disulfide exchange reactions. As a reducing substrate of peroxiredoxin 1, thioredoxin 2 is preferred over thioredoxin 1. The chain is Thioredoxin-2 from Drosophila yakuba (Fruit fly).